Here is a 680-residue protein sequence, read N- to C-terminus: DNA-directed RNA polymerase subunit beta' (680 aa).

Cys-69, Cys-71, Cys-87, and Cys-90 together coordinate Zn(2+). Mg(2+)-binding residues include Asp-489, Asp-491, and Asp-493.

This sequence belongs to the RNA polymerase beta' chain family. RpoC1 subfamily. In plastids the minimal PEP RNA polymerase catalytic core is composed of four subunits: alpha, beta, beta', and beta''. When a (nuclear-encoded) sigma factor is associated with the core the holoenzyme is formed, which can initiate transcription. Mg(2+) serves as cofactor. Zn(2+) is required as a cofactor.

It is found in the plastid. The protein localises to the chloroplast. The enzyme catalyses RNA(n) + a ribonucleoside 5'-triphosphate = RNA(n+1) + diphosphate. Functionally, DNA-dependent RNA polymerase catalyzes the transcription of DNA into RNA using the four ribonucleoside triphosphates as substrates. This Lepidium virginicum (Virginia pepperweed) protein is DNA-directed RNA polymerase subunit beta'.